Consider the following 746-residue polypeptide: NAD(P)H-quinone oxidoreductase subunit 5, chloroplastic (746 aa).

16 consecutive transmembrane segments (helical) span residues 9 to 29 (WMIPFIPLPVPILLGMGLLLF), 40 to 60 (WAFLSIFLLSIVMIFSIDLSI), 89 to 109 (IDPLTSIMSILITTVGILVLI), 125 to 145 (FAYMSFFNTSMLGLVTSSNLI), 147 to 167 (VYIFWELVGMCSYLLIGFWFT), 185 to 205 (GDFGLLLGILGLYWITGSFEF), 219 to 239 (NQVHFLFVTLCAFLLFAGPVA), 258 to 278 (TPISALIHAATMVAAGIFLVA), 280 to 300 (LLPLFIGIPYIMYLISLIGII), 327 to 347 (LGYMMLALGMGSYRAALFHLI), 354 to 374 (ALLFLGSGSIIHSMEAVVGYS), 396 to 416 (TTFLLGTLSLCGIPPLACFWS), 425 to 445 (WLYSPIFAVIACSTAGLTAFY), 546 to 566 (ILFPMLILVLFTLFVGAIGIP), 607 to 627 (FSVSIAFFGIFIAFFLYKPAY), and 723 to 743 (LLLYLFYVLIFLFIYYFLNLL).

It belongs to the complex I subunit 5 family. In terms of assembly, NDH is composed of at least 16 different subunits, 5 of which are encoded in the nucleus.

Its subcellular location is the plastid. It localises to the chloroplast thylakoid membrane. It catalyses the reaction a plastoquinone + NADH + (n+1) H(+)(in) = a plastoquinol + NAD(+) + n H(+)(out). The catalysed reaction is a plastoquinone + NADPH + (n+1) H(+)(in) = a plastoquinol + NADP(+) + n H(+)(out). In terms of biological role, NDH shuttles electrons from NAD(P)H:plastoquinone, via FMN and iron-sulfur (Fe-S) centers, to quinones in the photosynthetic chain and possibly in a chloroplast respiratory chain. The immediate electron acceptor for the enzyme in this species is believed to be plastoquinone. Couples the redox reaction to proton translocation, and thus conserves the redox energy in a proton gradient. This is NAD(P)H-quinone oxidoreductase subunit 5, chloroplastic (ndhF) from Carica papaya (Papaya).